The following is a 298-amino-acid chain: Tyrosine recombinase XerD (298 aa).

In terms of domain architecture, Core-binding (CB) spans 3–88; that stretch reads TLEHPLIDRF…GLRGFYRYCL (86 aa). One can recognise a Tyr recombinase domain in the interval 109 to 292; it reads PLPKSLSEAD…ARARLQDLHA (184 aa). Residues arginine 149, lysine 173, histidine 244, arginine 247, and histidine 270 contribute to the active site. Tyrosine 279 (O-(3'-phospho-DNA)-tyrosine intermediate) is an active-site residue.

Belongs to the 'phage' integrase family. XerD subfamily. As to quaternary structure, forms a cyclic heterotetrameric complex composed of two molecules of XerC and two molecules of XerD.

The protein resides in the cytoplasm. In terms of biological role, site-specific tyrosine recombinase, which acts by catalyzing the cutting and rejoining of the recombining DNA molecules. The XerC-XerD complex is essential to convert dimers of the bacterial chromosome into monomers to permit their segregation at cell division. It also contributes to the segregational stability of plasmids. In Pseudomonas aeruginosa (strain ATCC 15692 / DSM 22644 / CIP 104116 / JCM 14847 / LMG 12228 / 1C / PRS 101 / PAO1), this protein is Tyrosine recombinase XerD.